The chain runs to 664 residues: Bifunctional polymyxin resistance protein ArnA (664 aa).

The formyltransferase ArnAFT stretch occupies residues 1–308 (MSTKAVVFAY…EFGLVAGSQM (308 aa)). H106 functions as the Proton donor; for formyltransferase activity in the catalytic mechanism. (6R)-10-formyltetrahydrofolate is bound by residues R116 and 138-142 (VKRAD). Positions 318–664 (RRTRVLILGV…EAMAEKADQC (347 aa)) are dehydrogenase ArnADH. NAD(+) contacts are provided by residues D351 and 372–373 (DI). UDP-alpha-D-glucuronate is bound by residues A397, Y402, and 436–437 (TS). E438 (proton acceptor; for decarboxylase activity) is an active-site residue. UDP-alpha-D-glucuronate contacts are provided by residues R464, N495, 529–538 (RLVDGGAQKR), and Y616. Catalysis depends on R622, which acts as the Proton donor; for decarboxylase activity.

It in the N-terminal section; belongs to the Fmt family. UDP-L-Ara4N formyltransferase subfamily. This sequence in the C-terminal section; belongs to the NAD(P)-dependent epimerase/dehydratase family. UDP-glucuronic acid decarboxylase subfamily. As to quaternary structure, homohexamer, formed by a dimer of trimers.

It carries out the reaction UDP-alpha-D-glucuronate + NAD(+) = UDP-beta-L-threo-pentopyranos-4-ulose + CO2 + NADH. It catalyses the reaction UDP-4-amino-4-deoxy-beta-L-arabinose + (6R)-10-formyltetrahydrofolate = UDP-4-deoxy-4-formamido-beta-L-arabinose + (6S)-5,6,7,8-tetrahydrofolate + H(+). It participates in nucleotide-sugar biosynthesis; UDP-4-deoxy-4-formamido-beta-L-arabinose biosynthesis; UDP-4-deoxy-4-formamido-beta-L-arabinose from UDP-alpha-D-glucuronate: step 1/3. Its pathway is nucleotide-sugar biosynthesis; UDP-4-deoxy-4-formamido-beta-L-arabinose biosynthesis; UDP-4-deoxy-4-formamido-beta-L-arabinose from UDP-alpha-D-glucuronate: step 3/3. The protein operates within bacterial outer membrane biogenesis; lipopolysaccharide biosynthesis. Functionally, bifunctional enzyme that catalyzes the oxidative decarboxylation of UDP-glucuronic acid (UDP-GlcUA) to UDP-4-keto-arabinose (UDP-Ara4O) and the addition of a formyl group to UDP-4-amino-4-deoxy-L-arabinose (UDP-L-Ara4N) to form UDP-L-4-formamido-arabinose (UDP-L-Ara4FN). The modified arabinose is attached to lipid A and is required for resistance to polymyxin and cationic antimicrobial peptides. The sequence is that of Bifunctional polymyxin resistance protein ArnA from Pseudomonas syringae pv. syringae (strain B728a).